The primary structure comprises 64 residues: Large ribosomal subunit protein bL32 (64 aa).

Residues 1 to 35 (MAVQKSRVTPSRRGQRRSHDALTAKQLSTDPTSGE) are disordered.

The protein belongs to the bacterial ribosomal protein bL32 family.

In Xanthomonas axonopodis pv. citri (strain 306), this protein is Large ribosomal subunit protein bL32.